The primary structure comprises 521 residues: Feruloyl esterase B (521 aa).

An N-terminal signal peptide occupies residues 1 to 17 (MKVASLLSLALPGAALA). Disulfide bonds link C26–C72 and C61–C111. N37, N51, N77, N95, N144, and N177 each carry an N-linked (GlcNAc...) asparagine glycan. Disulfide bonds link C184/C438, C253/C270, and C279/C288. S185 (acyl-ester intermediate) is an active-site residue. Residues D254, D257, A259, D261, and I263 each coordinate Ca(2+). Residues N284, N347, N352, and N378 are each glycosylated (N-linked (GlcNAc...) asparagine). Catalysis depends on charge relay system residues D397 and H437. N488 and N511 each carry an N-linked (GlcNAc...) asparagine glycan. Residues C498 and C520 are joined by a disulfide bond.

It belongs to the tannase family. As to quaternary structure, homodimer. In terms of processing, glycosylated.

The protein resides in the secreted. The catalysed reaction is feruloyl-polysaccharide + H2O = ferulate + polysaccharide.. With respect to regulation, inhibited by the specific serine esterase inhibitor AEBSF. Involved in degradation of plant cell walls. Hydrolyzes of the feruloyl-arabinose ester bond in arabinoxylans as well as the feruloyl-galactose and feruloyl-arabinose ester bonds in pectin. The sequence is that of Feruloyl esterase B (faeB) from Aspergillus niger.